Reading from the N-terminus, the 209-residue chain is Protein phosphotransferase ChpT (209 aa).

Position 22 is a phosphohistidine (His22).

It belongs to the ChpT phosphotransferase family. As to quaternary structure, homodimer. Forms an asymmetric heterotetramer with CtrA (2:2). There are at least two modes of interaction between ChpT and CtrA, only one of which is competent to catalyze His-Asp phosphoryl transfer. Post-translationally, is phosphorylated by CckA-P on His-22.

Its subcellular location is the cytoplasm. Component of a regulatory phosphorelay system that controls B.abortus cell growth, division, and intracellular survival inside mammalian host cells. This signaling pathway is composed of CckA, ChpT, CtrA and CpdR. ChpT efficiently and specifically shuttles phosphoryl groups from the CckA kinase to the receiver domains of both CtrA and CpdR. Does not bind ATP. Overexpression of chpT results in a defect in cell morphology, DNA content, and intracellular survival in human macrophages. The polypeptide is Protein phosphotransferase ChpT (Brucella abortus (strain 2308)).